Reading from the N-terminus, the 372-residue chain is Aminomethyltransferase (372 aa).

It belongs to the GcvT family. As to quaternary structure, the glycine cleavage system is composed of four proteins: P, T, L and H.

The catalysed reaction is N(6)-[(R)-S(8)-aminomethyldihydrolipoyl]-L-lysyl-[protein] + (6S)-5,6,7,8-tetrahydrofolate = N(6)-[(R)-dihydrolipoyl]-L-lysyl-[protein] + (6R)-5,10-methylene-5,6,7,8-tetrahydrofolate + NH4(+). Functionally, the glycine cleavage system catalyzes the degradation of glycine. In Burkholderia orbicola (strain MC0-3), this protein is Aminomethyltransferase.